The primary structure comprises 175 residues: Transcriptional repressor NrdR (175 aa).

Residues 3–32 (CPYCSHPDSKVIDSRDVDDGVRRRRECVVC) fold into a zinc finger. The region spanning 47 to 137 (LFVVKKDQRR…VYREFTDITQ (91 aa)) is the ATP-cone domain.

It belongs to the NrdR family. Zn(2+) is required as a cofactor.

Negatively regulates transcription of bacterial ribonucleotide reductase nrd genes and operons by binding to NrdR-boxes. The sequence is that of Transcriptional repressor NrdR from Dehalococcoides mccartyi (strain ATCC BAA-2100 / JCM 16839 / KCTC 5957 / BAV1).